A 466-amino-acid chain; its full sequence is Cysteine--tRNA ligase 1 (466 aa).

Cys-27 contributes to the Zn(2+) binding site. The short motif at 29-39 (PTVQSPPHIGH) is the 'HIGH' region element. Residues Cys-211, His-236, and Glu-240 each coordinate Zn(2+). A 'KMSKS' region motif is present at residues 267-271 (KMSKS). Lys-270 contacts ATP.

This sequence belongs to the class-I aminoacyl-tRNA synthetase family. In terms of assembly, monomer. It depends on Zn(2+) as a cofactor.

The protein resides in the cytoplasm. It catalyses the reaction tRNA(Cys) + L-cysteine + ATP = L-cysteinyl-tRNA(Cys) + AMP + diphosphate. This Tropheryma whipplei (strain TW08/27) (Whipple's bacillus) protein is Cysteine--tRNA ligase 1.